The sequence spans 249 residues: Small ribosomal subunit protein eS6 (249 aa).

The segment covering arginine 216–alanine 229 has biased composition (basic and acidic residues). The disordered stretch occupies residues arginine 216–lysine 249. Phosphoserine is present on residues serine 235, serine 236, serine 240, serine 244, and serine 247. Positions serine 236–lysine 249 are enriched in low complexity.

Belongs to the eukaryotic ribosomal protein eS6 family. Component of the small ribosomal subunit. Post-translationally, ribosomal protein S6 is the major substrate of protein kinases in eukaryote ribosomes. The phosphorylation is stimulated by growth factors, tumor promoting agents, and mitogens. It is dephosphorylated at growth arrest.

It is found in the cytoplasm. Functionally, component of the 40S small ribosomal subunit. Plays an important role in controlling cell growth and proliferation through the selective translation of particular classes of mRNA. This Oncorhynchus mykiss (Rainbow trout) protein is Small ribosomal subunit protein eS6 (rps6).